Here is a 430-residue protein sequence, read N- to C-terminus: Trigger factor (430 aa).

Positions 163–248 (GDTVVFDFAG…IHEIKAQELP (86 aa)) constitute a PPIase FKBP-type domain.

This sequence belongs to the FKBP-type PPIase family. Tig subfamily.

It localises to the cytoplasm. The catalysed reaction is [protein]-peptidylproline (omega=180) = [protein]-peptidylproline (omega=0). Functionally, involved in protein export. Acts as a chaperone by maintaining the newly synthesized protein in an open conformation. Functions as a peptidyl-prolyl cis-trans isomerase. This is Trigger factor from Exiguobacterium sibiricum (strain DSM 17290 / CCUG 55495 / CIP 109462 / JCM 13490 / 255-15).